Reading from the N-terminus, the 104-residue chain is uncharacterized protein (104 aa).

This is an uncharacterized protein from Bacillus subtilis (strain 168).